The primary structure comprises 153 residues: MADTLMSDTPFWQRKTLDEMTDAEWESLCDGCGQCCLHKLMDEDTDEIYFTNVACRQLNIKTCQCRHYERRFEFEPDCIKLTRENLPDFEWLPMTCAYRLLAEGKPLPTWHPLQTGSKAAMHGERISVRHIAVKESEVRDWQDHILNKPSWAE.

This sequence belongs to the UPF0260 family.

This chain is UPF0260 protein YcgN, found in Salmonella typhi.